The sequence spans 56 residues: Large ribosomal subunit protein bL32 (56 aa).

Residues 1 to 34 (MAVQQNKPTRSKRGMRRSHDALTTSTVSVDKASG) are disordered.

The protein belongs to the bacterial ribosomal protein bL32 family.

This is Large ribosomal subunit protein bL32 from Sodalis glossinidius (strain morsitans).